Reading from the N-terminus, the 283-residue chain is MADDTAYILSEYLQTLDNVPNETKHIFDEISVKEVAVHDIWKRIQAADSQIQSYIKSHGSLTPHPKEDALYSTIREEYQKAINIQNEKVQLADRARLGLTRHIKRLDDRLAKAGHGFTAAELLNAPDYYASSPYGGYSPSGASSARQTPAPSRSGASTAGRRRTSATTRGAIQNGVYHSPYTASLADSGSTRGQKVSNATATTQLETKADSTTPNEMVSEEDMEEDNEKYCFCQQGSYGQMVACDNANCEREWFHMECVGLKAPPEGTWYCEACRDQKLVDAK.

Residues 137-171 are compositionally biased toward low complexity; that stretch reads YSPSGASSARQTPAPSRSGASTAGRRRTSATTRGA. The tract at residues 137 to 224 is disordered; the sequence is YSPSGASSAR…NEMVSEEDME (88 aa). Over residues 181–216 the composition is skewed to polar residues; sequence YTASLADSGSTRGQKVSNATATTQLETKADSTTPNE. A PHD-type zinc finger spans residues 228 to 277; the sequence is EKYCFCQQGSYGQMVACDNANCEREWFHMECVGLKAPPEGTWYCEACRDQ. Cys-231, Cys-233, Cys-244, Cys-249, His-255, Cys-258, Cys-271, and Cys-274 together coordinate Zn(2+).

The protein belongs to the ING family. Interacts with H3K4me3 and to a lesser extent with H3K4me2. Component of a histone deacetylase complex.

Its subcellular location is the nucleus. Its function is as follows. Component of a histone deacetylase complex responsible for the deacetylation of lysine residues on the N-terminal part of the core histones (H2A, H2B, H3 and H4). Histone deacetylation gives a tag for epigenetic repression and plays an important role in transcriptional regulation, cell cycle progression and developmental events. Has a role in silencing of mating type genes. The polypeptide is Chromatin modification-related protein png1 (png1) (Schizosaccharomyces pombe (strain 972 / ATCC 24843) (Fission yeast)).